Here is a 420-residue protein sequence, read N- to C-terminus: MKIRLDKSLPGGEIAVPSSKSYTIRGLIAAAQANGQSRIISPLAADDTLASRQVLSGLGIDINTDAEAESWQLTGNTFKKPAGNLFCRESAATLRFMSAVCARLPFECRLLAGHSLMRRPMLPLIQALHQLGIEIETRGNTTVIKGGEITRSKVSLPGNISSQYVSALMLMAPACKSGLEIHLATPPASLPYLKMTKQTLESFGIKAYTSIDWQEISIPPQPYLPARYRVEGDWSSASSFLALGAIAAPLFISNLDTESFQADRIMIKFLSEMGAEVESGQNWVKVSPKPLTAIQADLTHSIDLLPALAITAACAKGQSILSGVRQARIKESNRIRAVSQGLSAMGINVTEEDDRLIIEGGMPRGAEIDSLGDHRIAMAFGALGAVTGETCISEAECVSKTYPDFWQKLESLGGKVIKDV.

3-phosphoshikimate is bound by residues Lys20, Ser21, and Arg25. Phosphoenolpyruvate is bound at residue Lys20. Arg119 is a phosphoenolpyruvate binding site. 3-phosphoshikimate contacts are provided by Ser161, Ser162, Gln163, Ser189, Asp303, Gln326, and Lys330. Position 163 (Gln163) interacts with phosphoenolpyruvate. The active-site Proton acceptor is the Asp303. Residues Arg334, Arg375, and Lys400 each coordinate phosphoenolpyruvate.

Belongs to the EPSP synthase family. In terms of assembly, monomer.

Its subcellular location is the cytoplasm. It catalyses the reaction 3-phosphoshikimate + phosphoenolpyruvate = 5-O-(1-carboxyvinyl)-3-phosphoshikimate + phosphate. It functions in the pathway metabolic intermediate biosynthesis; chorismate biosynthesis; chorismate from D-erythrose 4-phosphate and phosphoenolpyruvate: step 6/7. Functionally, catalyzes the transfer of the enolpyruvyl moiety of phosphoenolpyruvate (PEP) to the 5-hydroxyl of shikimate-3-phosphate (S3P) to produce enolpyruvyl shikimate-3-phosphate and inorganic phosphate. The polypeptide is 3-phosphoshikimate 1-carboxyvinyltransferase (Dehalococcoides mccartyi (strain ATCC BAA-2266 / KCTC 15142 / 195) (Dehalococcoides ethenogenes (strain 195))).